A 704-amino-acid polypeptide reads, in one-letter code: Elongation factor G (704 aa).

The region spanning 10–290 (NKVRNIGIMA…AVIDYLPSPL (281 aa)) is the tr-type G domain. GTP contacts are provided by residues 19–26 (AHIDAGKT), 83–87 (DTPGH), and 137–140 (NKMD).

This sequence belongs to the TRAFAC class translation factor GTPase superfamily. Classic translation factor GTPase family. EF-G/EF-2 subfamily.

It is found in the cytoplasm. Its function is as follows. Catalyzes the GTP-dependent ribosomal translocation step during translation elongation. During this step, the ribosome changes from the pre-translocational (PRE) to the post-translocational (POST) state as the newly formed A-site-bound peptidyl-tRNA and P-site-bound deacylated tRNA move to the P and E sites, respectively. Catalyzes the coordinated movement of the two tRNA molecules, the mRNA and conformational changes in the ribosome. This Clavibacter sepedonicus (Clavibacter michiganensis subsp. sepedonicus) protein is Elongation factor G.